Consider the following 132-residue polypeptide: Small ribosomal subunit protein uS8 (132 aa).

Belongs to the universal ribosomal protein uS8 family. Part of the 30S ribosomal subunit. Contacts proteins S5 and S12.

One of the primary rRNA binding proteins, it binds directly to 16S rRNA central domain where it helps coordinate assembly of the platform of the 30S subunit. The chain is Small ribosomal subunit protein uS8 from Enterococcus faecalis (strain ATCC 700802 / V583).